We begin with the raw amino-acid sequence, 80 residues long: Trefoil factor 3 (80 aa).

The N-terminal stretch at M1–A21 is a signal peptide. Positions N30–L73 constitute a P-type domain. Cystine bridges form between C32–C58, C42–C57, and C52–C69.

Monomer. Homodimer; disulfide-linked.

The protein resides in the secreted. It localises to the extracellular space. Its subcellular location is the extracellular matrix. It is found in the cytoplasm. Involved in the maintenance and repair of the intestinal mucosa. Promotes the mobility of epithelial cells in healing processes (motogen). The protein is Trefoil factor 3 (TFF3) of Felis catus (Cat).